A 143-amino-acid chain; its full sequence is Large ribosomal subunit protein uL11 (143 aa).

This sequence belongs to the universal ribosomal protein uL11 family. As to quaternary structure, part of the ribosomal stalk of the 50S ribosomal subunit. Interacts with L10 and the large rRNA to form the base of the stalk. L10 forms an elongated spine to which L12 dimers bind in a sequential fashion forming a multimeric L10(L12)X complex. Post-translationally, one or more lysine residues are methylated.

Forms part of the ribosomal stalk which helps the ribosome interact with GTP-bound translation factors. The sequence is that of Large ribosomal subunit protein uL11 from Kineococcus radiotolerans (strain ATCC BAA-149 / DSM 14245 / SRS30216).